A 293-amino-acid polypeptide reads, in one-letter code: Phosphate import ATP-binding protein PstB (293 aa).

In terms of domain architecture, ABC transporter spans 46 to 288 (FGIRGVDVFY…PDHELTEAYI (243 aa)). 78-85 (GPSGCGKS) contacts ATP.

Belongs to the ABC transporter superfamily. Phosphate importer (TC 3.A.1.7) family. As to quaternary structure, the complex is composed of two ATP-binding proteins (PstB), two transmembrane proteins (PstC and PstA) and a solute-binding protein (PstS).

The protein resides in the cell inner membrane. It catalyses the reaction phosphate(out) + ATP + H2O = ADP + 2 phosphate(in) + H(+). Its function is as follows. Part of the ABC transporter complex PstSACB involved in phosphate import. Responsible for energy coupling to the transport system. This chain is Phosphate import ATP-binding protein PstB, found in Saccharophagus degradans (strain 2-40 / ATCC 43961 / DSM 17024).